An 801-amino-acid chain; its full sequence is Phenylalanine--tRNA ligase beta subunit (801 aa).

Residues 39–153 (AEGLSKLVVG…DEAVPGDAIF (115 aa)) form the tRNA-binding domain. The 76-residue stretch at 406–481 (TEPVEVSTNL…RIYGYDKLPT (76 aa)) folds into the B5 domain. The Mg(2+) site is built by Asp-459, Asp-465, Glu-468, and Glu-469. Residues 708 to 801 (TKFPAMTRDI…LTEQVGAEVR (94 aa)) enclose the FDX-ACB domain.

This sequence belongs to the phenylalanyl-tRNA synthetase beta subunit family. Type 1 subfamily. Tetramer of two alpha and two beta subunits. Mg(2+) is required as a cofactor.

Its subcellular location is the cytoplasm. It carries out the reaction tRNA(Phe) + L-phenylalanine + ATP = L-phenylalanyl-tRNA(Phe) + AMP + diphosphate + H(+). The polypeptide is Phenylalanine--tRNA ligase beta subunit (Streptococcus pyogenes serotype M3 (strain SSI-1)).